Here is a 225-residue protein sequence, read N- to C-terminus: UPF0758 protein Vapar_4033 (225 aa).

The 123-residue stretch at Val103–Leu225 folds into the MPN domain. Zn(2+) contacts are provided by His174, His176, and Asp187. The JAMM motif motif lies at His174–Asp187.

It belongs to the UPF0758 family.

The sequence is that of UPF0758 protein Vapar_4033 from Variovorax paradoxus (strain S110).